The sequence spans 467 residues: Serine/threonine-protein kinase US3 homolog (467 aa).

The disordered stretch occupies residues G64 to A155. Positions N99–S111 are enriched in basic and acidic residues. Positions N117–A144 are enriched in acidic residues. One can recognise a Protein kinase domain in the interval F164 to F462. ATP contacts are provided by residues L170–V178 and K194. D279 acts as the Proton acceptor in catalysis.

Belongs to the protein kinase superfamily. Ser/Thr protein kinase family. Phosphorylated by UL13 homolog; this phosphorylation regulates subsequent phosphorylation of UL31 and UL34 homologs by US3. Autophosphorylated.

Its subcellular location is the host cytoplasm. It is found in the host nucleus. It carries out the reaction L-seryl-[protein] + ATP = O-phospho-L-seryl-[protein] + ADP + H(+). It catalyses the reaction L-threonyl-[protein] + ATP = O-phospho-L-threonyl-[protein] + ADP + H(+). Its function is as follows. Multifunctional serine/threonine kinase that plays a role in several processes including egress of virus particles from the nucleus, modulation of the actin cytoskeleton and inhibition of apoptosis. Phosphorylates UL31 and UL34 homologs, two critical regulators of capsid budding from nucleus to endoplasmic reticulum, thereby facilitating virion egress. Modulates and redistributes host components of the nuclear envelope, including LMNA, emerin/EMD and the nuclear matrix protein MATR3. Phosphorylates envelope glycoprotein B (gB), probably to direct it to the cell surface. Promotes virus intracellular spread by restructuring host cell cytoskeleton. Blocks host apoptosis to extend cell survival and allow efficient viral replication. Promotes viral gene expression by phosphorylating host HDAC2 to reduce viral genome silencing. This chain is Serine/threonine-protein kinase US3 homolog, found in Bos taurus (Bovine).